The primary structure comprises 310 residues: HPr kinase/phosphorylase (310 aa).

Catalysis depends on residues H138 and K159. An ATP-binding site is contributed by 153–160; sequence GKSGVGKS. S160 is a Mg(2+) binding site. D177 acts as the Proton acceptor; for phosphorylation activity. Proton donor; for dephosphorylation activity in catalysis. Residues 201–210 form an important for the catalytic mechanism of both phosphorylation and dephosphorylation region; sequence LEIRGLGIIN. Residue E202 participates in Mg(2+) binding. R243 is an active-site residue. Residues 264 to 269 are important for the catalytic mechanism of dephosphorylation; sequence PVRPGR.

It belongs to the HPrK/P family. In terms of assembly, homohexamer. The cofactor is Mg(2+).

It catalyses the reaction [HPr protein]-L-serine + ATP = [HPr protein]-O-phospho-L-serine + ADP + H(+). The enzyme catalyses [HPr protein]-O-phospho-L-serine + phosphate + H(+) = [HPr protein]-L-serine + diphosphate. In terms of biological role, catalyzes the ATP- as well as the pyrophosphate-dependent phosphorylation of a specific serine residue in HPr, a phosphocarrier protein of the phosphoenolpyruvate-dependent sugar phosphotransferase system (PTS). HprK/P also catalyzes the pyrophosphate-producing, inorganic phosphate-dependent dephosphorylation (phosphorolysis) of seryl-phosphorylated HPr (P-Ser-HPr). The two antagonistic activities of HprK/P are regulated by several intracellular metabolites, which change their concentration in response to the absence or presence of rapidly metabolisable carbon sources (glucose, fructose, etc.) in the growth medium. Also phosphorylates/dephosphorylates the HPr-like catabolite repression protein crh on a specific serine residue. Therefore, by controlling the phosphorylation state of HPr and crh, HPrK/P is a sensor enzyme that plays a major role in the regulation of carbon metabolism and sugar transport: it mediates carbon catabolite repression (CCR), and regulates PTS-catalyzed carbohydrate uptake and inducer exclusion. This Bacillus velezensis (strain DSM 23117 / BGSC 10A6 / LMG 26770 / FZB42) (Bacillus amyloliquefaciens subsp. plantarum) protein is HPr kinase/phosphorylase.